The following is a 562-amino-acid chain: Arginine--tRNA ligase (562 aa).

Residues 129–139 (ANPTGPLHVGH) carry the 'HIGH' region motif.

This sequence belongs to the class-I aminoacyl-tRNA synthetase family. In terms of assembly, monomer.

It localises to the cytoplasm. The enzyme catalyses tRNA(Arg) + L-arginine + ATP = L-arginyl-tRNA(Arg) + AMP + diphosphate. This is Arginine--tRNA ligase from Stenotrophomonas maltophilia (strain K279a).